Consider the following 443-residue polypeptide: Putative type II methyltransferase M.BsuMIIP (443 aa).

Residues 4 to 440 (LRVMSLFSGI…QELIHTYVNK (437 aa)) enclose the SAM-dependent MTase C5-type domain. The active site involves Cys78.

This sequence belongs to the class I-like SAM-binding methyltransferase superfamily. C5-methyltransferase family.

It carries out the reaction a 2'-deoxycytidine in DNA + S-adenosyl-L-methionine = a 5-methyl-2'-deoxycytidine in DNA + S-adenosyl-L-homocysteine + H(+). A putative methylase, recognizes the double-stranded sequence 5'-GGCC-3', methylates C-?. There is no known cognate restriction enzyme. The protein is Putative type II methyltransferase M.BsuMIIP (mtbP) of Bacillus subtilis (strain 168).